A 144-amino-acid chain; its full sequence is Protein MIX23 (144 aa).

Position 2 is an N-acetylalanine (Ala-2). Positions 82-120 form a coiled coil; that stretch reads VKNLREEREKNLDDLTLLKQLRKEQTKLKWMQSELNVEE. Lys-100 is subject to N6-acetyllysine.

Belongs to the MIX23 family.

The chain is Protein MIX23 from Homo sapiens (Human).